The following is a 63-amino-acid chain: Toxin S6C6 (63 aa).

Disulfide bonds link C3-C24, C6-C11, C17-C39, C43-C55, and C56-C61.

This sequence belongs to the three-finger toxin family. Ancestral subfamily. Orphan group XIX sub-subfamily. In terms of tissue distribution, expressed by the venom gland.

The protein localises to the secreted. Functionally, may enhance presynaptic acetylcholine release. The protein is Toxin S6C6 of Dendroaspis jamesoni kaimosae (Eastern Jameson's mamba).